A 159-amino-acid chain; its full sequence is Heat shock protein beta-9 (159 aa).

In terms of domain architecture, sHSP spans L36 to L147.

Belongs to the small heat shock protein (HSP20) family. In terms of tissue distribution, testis specific.

The protein localises to the cytoplasm. The protein resides in the nucleus. The chain is Heat shock protein beta-9 (HSPB9) from Homo sapiens (Human).